The sequence spans 558 residues: Dihydroxy-acid dehydratase (558 aa).

D78 serves as a coordination point for Mg(2+). C119 serves as a coordination point for [2Fe-2S] cluster. Mg(2+)-binding residues include D120 and K121. K121 carries the post-translational modification N6-carboxylysine. C192 is a [2Fe-2S] cluster binding site. E446 is a Mg(2+) binding site. S472 acts as the Proton acceptor in catalysis.

The protein belongs to the IlvD/Edd family. Homodimer. [2Fe-2S] cluster is required as a cofactor. Mg(2+) serves as cofactor.

The enzyme catalyses (2R)-2,3-dihydroxy-3-methylbutanoate = 3-methyl-2-oxobutanoate + H2O. It catalyses the reaction (2R,3R)-2,3-dihydroxy-3-methylpentanoate = (S)-3-methyl-2-oxopentanoate + H2O. It functions in the pathway amino-acid biosynthesis; L-isoleucine biosynthesis; L-isoleucine from 2-oxobutanoate: step 3/4. Its pathway is amino-acid biosynthesis; L-valine biosynthesis; L-valine from pyruvate: step 3/4. Functionally, functions in the biosynthesis of branched-chain amino acids. Catalyzes the dehydration of (2R,3R)-2,3-dihydroxy-3-methylpentanoate (2,3-dihydroxy-3-methylvalerate) into 2-oxo-3-methylpentanoate (2-oxo-3-methylvalerate) and of (2R)-2,3-dihydroxy-3-methylbutanoate (2,3-dihydroxyisovalerate) into 2-oxo-3-methylbutanoate (2-oxoisovalerate), the penultimate precursor to L-isoleucine and L-valine, respectively. The polypeptide is Dihydroxy-acid dehydratase (Campylobacter jejuni subsp. jejuni serotype O:2 (strain ATCC 700819 / NCTC 11168)).